The chain runs to 366 residues: Ubiquitin carboxyl-terminal hydrolase 46 (366 aa).

Residues 35–365 (FGLVNFGNTC…SGYILFYQSR (331 aa)) form the USP domain. Cys-44 (nucleophile) is an active-site residue. Cys-182, Cys-185, Cys-229, and Cys-232 together coordinate Zn(2+). The Proton acceptor role is filled by His-313.

This sequence belongs to the peptidase C19 family. USP12/USP46 subfamily. In terms of assembly, interacts with WDR48. Interacts with WDR20. Interacts with DMWD. Component of the USP46/WDR20/WDR48 deubiquitinating complex. Detected in lung and spleen, and at lower levels in brain, kidney, testis and liver.

Its subcellular location is the cytoplasm. It catalyses the reaction Thiol-dependent hydrolysis of ester, thioester, amide, peptide and isopeptide bonds formed by the C-terminal Gly of ubiquitin (a 76-residue protein attached to proteins as an intracellular targeting signal).. In terms of biological role, deubiquitinating enzyme that plays a role in behavior, possibly by regulating GABA action. May act by mediating the deubiquitination of GAD1/GAD67. Has almost no deubiquitinating activity by itself and requires the interaction with WDR48 to have a high activity. Not involved in deubiquitination of monoubiquitinated FANCD2. This Rattus norvegicus (Rat) protein is Ubiquitin carboxyl-terminal hydrolase 46.